A 300-amino-acid polypeptide reads, in one-letter code: Type II methyltransferase M.XycI (300 aa).

Positions Arg109–Thr129 are disordered. Residues Arg112–Pro127 are compositionally biased toward basic and acidic residues.

This sequence belongs to the N(4)/N(6)-methyltransferase family. N(4) subfamily.

It carries out the reaction a 2'-deoxycytidine in DNA + S-adenosyl-L-methionine = an N(4)-methyl-2'-deoxycytidine in DNA + S-adenosyl-L-homocysteine + H(+). A beta subtype methylase, recognizes the double-stranded sequence 5'-CCCGGG-3', methylates C-2 on both strands, and protects the DNA from cleavage by the XcyI endonuclease. The polypeptide is Type II methyltransferase M.XycI (xcyIM) (Xanthomonas campestris pv. cyanopsidis).